The following is a 213-amino-acid chain: Orotate phosphoribosyltransferase (213 aa).

Residue Lys-26 coordinates 5-phospho-alpha-D-ribose 1-diphosphate. Orotate is bound at residue 34-35; that stretch reads FF. 5-phospho-alpha-D-ribose 1-diphosphate is bound by residues 72–73, Arg-99, Lys-100, Lys-103, His-105, and 124–132; these read YK and DDVITAGTA. Orotate is bound by residues Thr-128 and Arg-156.

The protein belongs to the purine/pyrimidine phosphoribosyltransferase family. PyrE subfamily. In terms of assembly, homodimer. It depends on Mg(2+) as a cofactor.

The enzyme catalyses orotidine 5'-phosphate + diphosphate = orotate + 5-phospho-alpha-D-ribose 1-diphosphate. Its pathway is pyrimidine metabolism; UMP biosynthesis via de novo pathway; UMP from orotate: step 1/2. In terms of biological role, catalyzes the transfer of a ribosyl phosphate group from 5-phosphoribose 1-diphosphate to orotate, leading to the formation of orotidine monophosphate (OMP). The chain is Orotate phosphoribosyltransferase from Cronobacter sakazakii (strain ATCC BAA-894) (Enterobacter sakazakii).